The primary structure comprises 428 residues: Threonine synthase (428 aa).

The residue at position 107 (Lys107) is an N6-(pyridoxal phosphate)lysine.

Belongs to the threonine synthase family. The cofactor is pyridoxal 5'-phosphate.

The enzyme catalyses O-phospho-L-homoserine + H2O = L-threonine + phosphate. Its pathway is amino-acid biosynthesis; L-threonine biosynthesis; L-threonine from L-aspartate: step 5/5. With respect to regulation, is competitively inhibited by L-threo-3-hydroxyhomoserine phosphate. Functionally, catalyzes the gamma-elimination of phosphate from L-phosphohomoserine and the beta-addition of water to produce L-threonine. To a lesser extent, is able to slowly catalyze the deamination of L-threonine into alpha-ketobutyrate and that of L-serine and 3-chloroalanine into pyruvate. Is also able to rapidly convert vinylglycine to threonine, which proves that the pyridoxal p-quinonoid of vinylglycine is an intermediate in the TS reaction. The protein is Threonine synthase (thrC) of Escherichia coli (strain K12).